The chain runs to 344 residues: N-acetyl-gamma-glutamyl-phosphate reductase (344 aa).

Cysteine 150 is a catalytic residue.

This sequence belongs to the NAGSA dehydrogenase family. Type 1 subfamily.

It is found in the cytoplasm. It carries out the reaction N-acetyl-L-glutamate 5-semialdehyde + phosphate + NADP(+) = N-acetyl-L-glutamyl 5-phosphate + NADPH + H(+). It functions in the pathway amino-acid biosynthesis; L-arginine biosynthesis; N(2)-acetyl-L-ornithine from L-glutamate: step 3/4. In terms of biological role, catalyzes the NADPH-dependent reduction of N-acetyl-5-glutamyl phosphate to yield N-acetyl-L-glutamate 5-semialdehyde. The polypeptide is N-acetyl-gamma-glutamyl-phosphate reductase (Ectopseudomonas mendocina (strain ymp) (Pseudomonas mendocina)).